Here is a 684-residue protein sequence, read N- to C-terminus: Nuclear transcription factor Y subunit gamma (684 aa).

Disordered stretches follow at residues 1-74 (MENQ…NIST), 112-238 (MNSP…SSFQ), 414-487 (HSPQ…TQQL), and 511-650 (QQQQ…KNDE). The segment covering 21-49 (SNSHNNHHNNNNNNNYNNNNNNNINNINN) has biased composition (low complexity). Over residues 58–74 (KSIQQHSPHSSTPNIST) the composition is skewed to polar residues. Positions 142 to 162 (HQHPSSASSSSSSSSSSLSSS) are enriched in low complexity. Basic residues predominate over residues 163–176 (SHHHHSNHHHHHPN). Residues 188–203 (PSLNDSSSNGNGTPAL) are compositionally biased toward polar residues. Residues 220-238 (TPTSTPNQRFQSNGSSSFQ) are compositionally biased toward low complexity. A compositionally biased stretch (polar residues) spans 414 to 423 (HSPQLQEQSS). Positions 424 to 437 (NNNNNNNNNNNNNN) are enriched in low complexity. Composition is skewed to polar residues over residues 438–456 (SVSV…SPLS) and 464–477 (SQDY…NNHN). Composition is skewed to low complexity over residues 478–487 (QSSLSQTQQL), 511–522 (QQQQHSQQISQQ), and 529–637 (PSNS…NNNN).

This sequence belongs to the NFYC/HAP5 subunit family. In terms of assembly, heterotrimeric transcription factor composed of three components, NF-YA, NF-YB and NF-YC. NF-YB and NF-YC must interact and dimerize for NF-YA association and DNA binding.

It localises to the nucleus. In terms of biological role, stimulates the transcription of various genes by recognizing and binding to a CCAAT motif in promoters. This is Nuclear transcription factor Y subunit gamma (nfyc-1) from Dictyostelium discoideum (Social amoeba).